The following is an 80-amino-acid chain: SPbeta prophage-derived uncharacterized HTH-type transcriptional regulator YotL (80 aa).

The HTH cro/C1-type domain occupies 12-67; it reads LNELMHEYSVSIEDLVECTGLSKQRINDYVGGFKSNMNIGTAMTFADAIGCSIEEL. Residues 23-42 constitute a DNA-binding region (H-T-H motif); that stretch reads IEDLVECTGLSKQRINDYVG.

The polypeptide is SPbeta prophage-derived uncharacterized HTH-type transcriptional regulator YotL (yotL) (Bacillus subtilis (strain 168)).